A 413-amino-acid polypeptide reads, in one-letter code: MTPSISWSLLLLAGLCCLVPSFLAEDVQETDTSQKDQSPASHEIATNLGDFALRLYRELVHQSNTSNIFFSPVSIATAFAMLSLGSKGDTHTQILEGLQFNLTQTSEADIHKSFQHLLQTLNRPDSELQLSTGNGLFVNNDLKLVEKFLEEAKNHYQAEVFSVNFAESEEAKKVINDFVEKGTQGKIVEAVKKLDQDTVFALANYILFKGKWKQPFDPENTEEAEFHVDESTTVKVPMMTLSGMLDVHHCSMLSSWVLLMDYAGNTTAVFLLPDDGKMQHLEQTLNKELISQFLLNRRRSDAQIHIPRLSISGNYNLKTLMSPLGITRIFNNGADLSGITEENAPLKLSKAVHKAVLTIDETGTEAAAATVLQVATYSMPPIVRFDHPFLFIIFEEHTQSPIFVGKVVDPTHK.

An N-terminal signal peptide occupies residues 1–24 (MTPSISWSLLLLAGLCCLVPSFLA). Asn64, Asn101, and Asn265 each carry an N-linked (GlcNAc...) asparagine glycan. Residues 368-387 (AATVLQVATYSMPPIVRFDH) are RCL.

This sequence belongs to the serpin family.

It is found in the secreted. Inhibitor of serine proteases. Can inhibit trypsin and chymotrypsin; relatively ineffective against elastase. The protein is Alpha-1-antitrypsin 1-4 (Serpina1d) of Mus musculus (Mouse).